Reading from the N-terminus, the 188-residue chain is Probable nicotinate-nucleotide adenylyltransferase (188 aa).

It belongs to the NadD family.

The catalysed reaction is nicotinate beta-D-ribonucleotide + ATP + H(+) = deamido-NAD(+) + diphosphate. Its pathway is cofactor biosynthesis; NAD(+) biosynthesis; deamido-NAD(+) from nicotinate D-ribonucleotide: step 1/1. Its function is as follows. Catalyzes the reversible adenylation of nicotinate mononucleotide (NaMN) to nicotinic acid adenine dinucleotide (NaAD). The chain is Probable nicotinate-nucleotide adenylyltransferase from Sulfurovum sp. (strain NBC37-1).